A 1104-amino-acid chain; its full sequence is DNA polymerase delta catalytic subunit (1104 aa).

Residues 1–60 (MKRSIVTGGGNNDKKFKAQPPPKNNYRGGGDDEEDDEFEEDDDEDEGDEFGEEEDEDDID) are disordered. Residues 31–60 (DDEEDDEFEEDDDEDEGDEFGEEEDEDDID) are compositionally biased toward acidic residues. Zn(2+) is bound by residues cysteine 1012, cysteine 1015, cysteine 1027, and cysteine 1030. The CysA-type zinc finger occupies 1012 to 1030 (CMNCPKELTDTESTTCINC). The [4Fe-4S] cluster site is built by cysteine 1059, cysteine 1062, cysteine 1072, and cysteine 1077. Positions 1059-1077 (CQRCSGSLHQPVLCSNRDC) match the CysB motif motif.

This sequence belongs to the DNA polymerase type-B family. As to quaternary structure, heterotetramer composed of subunits of 125 kDa, 50 kDa, 66 kDa and 12 kDa. The 125 kDa subunit contains the polymerase active site and most likely the active site for the 3'-5' exonuclease activity. It depends on [4Fe-4S] cluster as a cofactor.

It localises to the nucleus. The enzyme catalyses DNA(n) + a 2'-deoxyribonucleoside 5'-triphosphate = DNA(n+1) + diphosphate. Its function is as follows. Possesses two enzymatic activities: DNA synthesis (polymerase) and an exonucleolytic activity that degrades single stranded DNA in the 3'- to 5'-direction. The protein is DNA polymerase delta catalytic subunit (pold1) of Dictyostelium discoideum (Social amoeba).